The following is a 241-amino-acid chain: Fatty acid metabolism regulator protein (241 aa).

The HTH gntR-type domain occupies 6–74; it reads KGPASFAEKY…HGKPTRVNNF (69 aa). Residues 34–53 constitute a DNA-binding region (H-T-H motif); sequence ERELSELIGVTRTTLREVLQ.

Homodimer.

It is found in the cytoplasm. Multifunctional regulator of fatty acid metabolism. The sequence is that of Fatty acid metabolism regulator protein from Shewanella sp. (strain MR-4).